Consider the following 99-residue polypeptide: Pyruvate synthase subunit PorD (99 aa).

2 consecutive 4Fe-4S ferredoxin-type domains span residues 32-60 (MRPI…IQEG) and 61-91 (GIMK…MRPE). Positions 41, 44, 47, 51, 71, 74, 77, and 81 each coordinate [4Fe-4S] cluster.

Heterotetramer of one alpha, one beta, one delta and one gamma chain. It depends on [4Fe-4S] cluster as a cofactor.

This chain is Pyruvate synthase subunit PorD (porD), found in Thermotoga maritima (strain ATCC 43589 / DSM 3109 / JCM 10099 / NBRC 100826 / MSB8).